The chain runs to 431 residues: 23S rRNA (uracil(1939)-C(5))-methyltransferase RlmD (431 aa).

Positions 10–68 constitute a TRAM domain; that stretch reads RVTTRQIITVKVNDLDSFGQGVARHNGKALFIPGLLPEESAEVIITEDKKQFARARVSR. Residues Cys81, Cys87, Cys90, and Cys161 each coordinate [4Fe-4S] cluster. S-adenosyl-L-methionine-binding residues include Gln264, Phe293, Asn298, Glu314, Asn341, and Asp362. Cys388 functions as the Nucleophile in the catalytic mechanism.

The protein belongs to the class I-like SAM-binding methyltransferase superfamily. RNA M5U methyltransferase family. RlmD subfamily.

The enzyme catalyses uridine(1939) in 23S rRNA + S-adenosyl-L-methionine = 5-methyluridine(1939) in 23S rRNA + S-adenosyl-L-homocysteine + H(+). Its function is as follows. Catalyzes the formation of 5-methyl-uridine at position 1939 (m5U1939) in 23S rRNA. This Salmonella paratyphi A (strain ATCC 9150 / SARB42) protein is 23S rRNA (uracil(1939)-C(5))-methyltransferase RlmD.